We begin with the raw amino-acid sequence, 812 residues long: G patch domain-containing protein 1 homolog (812 aa).

The segment at 1 to 42 (MNRKKLAAYGQEFEDDDEEGSSVSKKPTQIHEEIATDEKGKR) is disordered. Positions 29 to 40 (QIHEEIATDEKG) are enriched in basic and acidic residues. Residues 145-191 (SNSIGVRMLRSMGWREGRGIGLANVKQKQKRGGESSEAQFDREQASK) enclose the G-patch domain. 2 disordered regions span residues 384–416 (ANEV…FPDE) and 584–812 (NEIE…EEKK). The span at 586–609 (IEMRERLLKSRAQRGAEEKKRNQS) shows a compositional bias: basic and acidic residues. 2 stretches are compositionally biased toward acidic residues: residues 610–630 (DDDD…ENEA) and 653–668 (DGAD…EEAE). Residues 669 to 720 (EKERQEILKKREEDLKRRREIVEKKEEENRKRVEKELKELENRDLLRVSKQQ) are compositionally biased toward basic and acidic residues. The span at 761–794 (MKKKKKDKKEKEKKKKSKKSKKSKKEKKTKRKHS) shows a compositional bias: basic residues. Residues 800–812 (DSGDNSDGWEEKK) are compositionally biased toward acidic residues.

This sequence belongs to the GPATCH1 family.

The protein is G patch domain-containing protein 1 homolog of Caenorhabditis elegans.